The chain runs to 294 residues: 4-hydroxy-tetrahydrodipicolinate synthase (294 aa).

Residue Thr47 participates in pyruvate binding. Tyr135 (proton donor/acceptor) is an active-site residue. The Schiff-base intermediate with substrate role is filled by Lys163. Thr205 contributes to the pyruvate binding site.

This sequence belongs to the DapA family. As to quaternary structure, homotetramer; dimer of dimers.

It is found in the cytoplasm. The enzyme catalyses L-aspartate 4-semialdehyde + pyruvate = (2S,4S)-4-hydroxy-2,3,4,5-tetrahydrodipicolinate + H2O + H(+). The protein operates within amino-acid biosynthesis; L-lysine biosynthesis via DAP pathway; (S)-tetrahydrodipicolinate from L-aspartate: step 3/4. Catalyzes the condensation of (S)-aspartate-beta-semialdehyde [(S)-ASA] and pyruvate to 4-hydroxy-tetrahydrodipicolinate (HTPA). The protein is 4-hydroxy-tetrahydrodipicolinate synthase of Rickettsia africae (strain ESF-5).